The primary structure comprises 474 residues: Glutamate--tRNA ligase (474 aa).

The 'HIGH' region motif lies at 9-19 (PSPTGYLHVGG). Residues 240-244 (KLSKR) carry the 'KMSKS' region motif. Residue Lys243 participates in ATP binding.

This sequence belongs to the class-I aminoacyl-tRNA synthetase family. Glutamate--tRNA ligase type 1 subfamily. Monomer.

It localises to the cytoplasm. It catalyses the reaction tRNA(Glu) + L-glutamate + ATP = L-glutamyl-tRNA(Glu) + AMP + diphosphate. Functionally, catalyzes the attachment of glutamate to tRNA(Glu) in a two-step reaction: glutamate is first activated by ATP to form Glu-AMP and then transferred to the acceptor end of tRNA(Glu). The chain is Glutamate--tRNA ligase from Aliivibrio fischeri (strain MJ11) (Vibrio fischeri).